The primary structure comprises 474 residues: Probable multidrug resistance protein NorM (474 aa).

The next 12 helical transmembrane spans lie at 33–50 (LWLAWPMALTQLGQIAMM), 65–87 (VAAAALAHFVLFSTFTMGLGLVS), 108–130 (SLRVGLWAGVIAGVPLTLGQLYG), 150–172 (YLDGLAWSLVPGWLFIALRGLMG), 179–201 (PALWIMLTAIPINLGLAYVLIHG), 211–233 (FGAGLATSIVSWAMCIAAAVVCV), 258–280 (LLQLGLPISGASVLEYGVFGAAA), 295–317 (QIALQVAAIMFMVPMGISVAATV), 334–356 (AGFAAIGLGFVFMAAMTLLVALT), 376–398 (TLTAALLIVGASFFIADGLQVVA), 410–432 (VPLLFAVLGFWVIGFPFCWVLGF), and 436–458 (LGPFGVWIGLAVGLVVYAALLVW).

It belongs to the multi antimicrobial extrusion (MATE) (TC 2.A.66.1) family.

Its subcellular location is the cell inner membrane. Multidrug efflux pump. The sequence is that of Probable multidrug resistance protein NorM (norM) from Rhodopseudomonas palustris (strain ATCC BAA-98 / CGA009).